The sequence spans 73 residues: MGSFSIWHWLIVLVIVMLVFGTKKLRNIGQDLGGAVKGFKDGMKTFEEPKEQIQQSSATAEKTVDVQAKDVNK.

A helical membrane pass occupies residues 1 to 21 (MGSFSIWHWLIVLVIVMLVFG). A disordered region spans residues 50–73 (KEQIQQSSATAEKTVDVQAKDVNK). Basic and acidic residues predominate over residues 62–73 (KTVDVQAKDVNK).

The protein belongs to the TatA/E family. In terms of assembly, the Tat system comprises two distinct complexes: a TatABC complex, containing multiple copies of TatA, TatB and TatC subunits, and a separate TatA complex, containing only TatA subunits. Substrates initially bind to the TatABC complex, which probably triggers association of the separate TatA complex to form the active translocon.

The protein resides in the cell inner membrane. Its function is as follows. Part of the twin-arginine translocation (Tat) system that transports large folded proteins containing a characteristic twin-arginine motif in their signal peptide across membranes. TatA could form the protein-conducting channel of the Tat system. The chain is Sec-independent protein translocase protein TatA from Polynucleobacter necessarius subsp. necessarius (strain STIR1).